The following is a 134-amino-acid chain: ATP synthase epsilon chain (134 aa).

The protein belongs to the ATPase epsilon chain family. F-type ATPases have 2 components, CF(1) - the catalytic core - and CF(0) - the membrane proton channel. CF(1) has five subunits: alpha(3), beta(3), gamma(1), delta(1), epsilon(1). CF(0) has three main subunits: a, b and c.

It localises to the cell membrane. Its function is as follows. Produces ATP from ADP in the presence of a proton gradient across the membrane. This chain is ATP synthase epsilon chain, found in Alkaliphilus oremlandii (strain OhILAs) (Clostridium oremlandii (strain OhILAs)).